The chain runs to 291 residues: Ribosomal RNA small subunit methyltransferase A (291 aa).

S-adenosyl-L-methionine is bound by residues asparagine 29, leucine 31, glycine 56, glutamate 77, aspartate 102, and asparagine 127.

Belongs to the class I-like SAM-binding methyltransferase superfamily. rRNA adenine N(6)-methyltransferase family. RsmA subfamily.

The protein localises to the cytoplasm. The catalysed reaction is adenosine(1518)/adenosine(1519) in 16S rRNA + 4 S-adenosyl-L-methionine = N(6)-dimethyladenosine(1518)/N(6)-dimethyladenosine(1519) in 16S rRNA + 4 S-adenosyl-L-homocysteine + 4 H(+). In terms of biological role, specifically dimethylates two adjacent adenosines (A1518 and A1519) in the loop of a conserved hairpin near the 3'-end of 16S rRNA in the 30S particle. May play a critical role in biogenesis of 30S subunits. The sequence is that of Ribosomal RNA small subunit methyltransferase A from Geobacillus sp. (strain WCH70).